The following is a 164-amino-acid chain: Large ribosomal subunit protein bL9 (164 aa).

It belongs to the bacterial ribosomal protein bL9 family.

Binds to the 23S rRNA. The sequence is that of Large ribosomal subunit protein bL9 from Psychrobacter sp. (strain PRwf-1).